A 260-amino-acid chain; its full sequence is MAVISMKQLLEAGVHFGHQTRRWNPKMKKYIFTERNGIYIIDLQKTVKKVDEAYNFLKQVSEDGGKVLFVGTKKQAQESIKNEAERAGQFYVNQRWLGGILTNYKTISKRVKRISEIEKMEEDGLFEVLPKKEVVEIKKEYDRLIKFLGGIRDMKSMPQALFVVDPRKERNAIAEARKLHIPIVGIVDTNCDPDEIDYVIPANDDAIRAVKLLTGKMADAVLEGQQGVSNEEVAAEQNIDLNEDEVVEVEEVKETSVESN.

The protein belongs to the universal ribosomal protein uS2 family.

This chain is Small ribosomal subunit protein uS2, found in Staphylococcus carnosus (strain TM300).